Reading from the N-terminus, the 881-residue chain is Phosphoenolpyruvate carboxylase (881 aa).

Active-site residues include H139 and K544.

This sequence belongs to the PEPCase type 1 family. Mg(2+) serves as cofactor.

It catalyses the reaction oxaloacetate + phosphate = phosphoenolpyruvate + hydrogencarbonate. Forms oxaloacetate, a four-carbon dicarboxylic acid source for the tricarboxylic acid cycle. This Marinobacter nauticus (strain ATCC 700491 / DSM 11845 / VT8) (Marinobacter aquaeolei) protein is Phosphoenolpyruvate carboxylase.